We begin with the raw amino-acid sequence, 269 residues long: Diphthine synthase (269 aa).

Residues Leu10, Asp87, Val90, 115–116 (SI), Leu166, Ala209, and His234 contribute to the S-adenosyl-L-methionine site.

It belongs to the diphthine synthase family. Homodimer.

The catalysed reaction is 2-[(3S)-amino-3-carboxypropyl]-L-histidyl-[translation elongation factor 2] + 3 S-adenosyl-L-methionine = diphthine-[translation elongation factor 2] + 3 S-adenosyl-L-homocysteine + 3 H(+). It functions in the pathway protein modification; peptidyl-diphthamide biosynthesis. In terms of biological role, S-adenosyl-L-methionine-dependent methyltransferase that catalyzes the trimethylation of the amino group of the modified target histidine residue in translation elongation factor 2 (EF-2), to form an intermediate called diphthine. The three successive methylation reactions represent the second step of diphthamide biosynthesis. This is Diphthine synthase from Pyrococcus furiosus (strain ATCC 43587 / DSM 3638 / JCM 8422 / Vc1).